The following is a 155-amino-acid chain: MKLRIISVGHKMPDWVQSACTEYTKRMPREMNVEIVEIKPDKRASGKNAEAVQEAEAKRILEAAGRDYLVALDEHGQEVTTLQLADKMRGWMESGRDVSLVIGGADGLHDSLKHKADWLWSLSKLTMPHGMVRVMLSEQLYRGLSVINNHPYHRE.

Residues leucine 72, glycine 103, and 122–127 (LSKLTM) contribute to the S-adenosyl-L-methionine site.

Belongs to the RNA methyltransferase RlmH family. In terms of assembly, homodimer.

The protein resides in the cytoplasm. It carries out the reaction pseudouridine(1915) in 23S rRNA + S-adenosyl-L-methionine = N(3)-methylpseudouridine(1915) in 23S rRNA + S-adenosyl-L-homocysteine + H(+). Its function is as follows. Specifically methylates the pseudouridine at position 1915 (m3Psi1915) in 23S rRNA. The protein is Ribosomal RNA large subunit methyltransferase H of Methylobacillus flagellatus (strain ATCC 51484 / DSM 6875 / VKM B-1610 / KT).